The sequence spans 133 residues: Sporulation-specific protein 2 (133 aa).

The protein belongs to the VPS13 family. Interacts with spo13 and spo15.

It localises to the cytoplasm. Its subcellular location is the cytoskeleton. The protein resides in the microtubule organizing center. It is found in the spindle pole body. Its function is as follows. Involved in sporulation. Plays a significant role in modification of the spindle pole body prior to spore formation and is required for initiating forespore membrane formation. Assists in the localization of spo13 to the outer surface of the SPB. In Schizosaccharomyces pombe (strain 972 / ATCC 24843) (Fission yeast), this protein is Sporulation-specific protein 2 (spo2).